We begin with the raw amino-acid sequence, 74 residues long: UPF0352 protein MS1910 (74 aa).

The protein belongs to the UPF0352 family.

In Mannheimia succiniciproducens (strain KCTC 0769BP / MBEL55E), this protein is UPF0352 protein MS1910.